Consider the following 297-residue polypeptide: Glycerol-3-phosphate dehydrogenase [NAD(P)+] (297 aa).

Residues tryptophan 11, arginine 33, and lysine 79 each coordinate NADPH. Residues lysine 79, glycine 107, and serine 109 each contribute to the sn-glycerol 3-phosphate site. Alanine 111 lines the NADPH pocket. Sn-glycerol 3-phosphate-binding residues include lysine 161, aspartate 214, serine 224, arginine 225, and asparagine 226. The active-site Proton acceptor is the lysine 161. Residue arginine 225 coordinates NADPH. Residues valine 249 and glutamate 251 each coordinate NADPH.

This sequence belongs to the NAD-dependent glycerol-3-phosphate dehydrogenase family.

It is found in the cytoplasm. It catalyses the reaction sn-glycerol 3-phosphate + NAD(+) = dihydroxyacetone phosphate + NADH + H(+). The catalysed reaction is sn-glycerol 3-phosphate + NADP(+) = dihydroxyacetone phosphate + NADPH + H(+). Its pathway is membrane lipid metabolism; glycerophospholipid metabolism. Its function is as follows. Catalyzes the reduction of the glycolytic intermediate dihydroxyacetone phosphate (DHAP) to sn-glycerol 3-phosphate (G3P), the key precursor for phospholipid synthesis. The chain is Glycerol-3-phosphate dehydrogenase [NAD(P)+] from Campylobacter jejuni subsp. doylei (strain ATCC BAA-1458 / RM4099 / 269.97).